Here is a 391-residue protein sequence, read N- to C-terminus: tRNA (cytosine(38)-C(5))-methyltransferase (391 aa).

Residues 4–391 (LRVLELYSGV…VAKLIKILYE (388 aa)) form the SAM-dependent MTase C5-type domain. Residues 13–15 (VGG), aspartate 34, 57–58 (IE), and serine 76 contribute to the S-adenosyl-L-methionine site. The active site involves cysteine 79. Serine 376 contributes to the S-adenosyl-L-methionine binding site.

It belongs to the class I-like SAM-binding methyltransferase superfamily. C5-methyltransferase family. In terms of tissue distribution, ubiquitous. Higher expression in testis, ovary and thymus and at much lower levels in spleen, prostate, colon, small intestine, and peripheral blood leukocytes.

The protein resides in the cytoplasm. The catalysed reaction is cytidine(38) in tRNA + S-adenosyl-L-methionine = 5-methylcytidine(38) in tRNA + S-adenosyl-L-homocysteine + H(+). Specifically methylates cytosine 38 in the anticodon loop of tRNA(Asp). Has higher activity on tRNA(Asp) modified with queuosine at position 34. This chain is tRNA (cytosine(38)-C(5))-methyltransferase (TRDMT1), found in Homo sapiens (Human).